A 218-amino-acid chain; its full sequence is Phosphatidylserine decarboxylase proenzyme (218 aa).

Residue Ser-187 is the Schiff-base intermediate with substrate; via pyruvic acid of the active site. Residue Ser-187 is modified to Pyruvic acid (Ser); by autocatalysis.

It belongs to the phosphatidylserine decarboxylase family. PSD-A subfamily. Heterodimer of a large membrane-associated beta subunit and a small pyruvoyl-containing alpha subunit. It depends on pyruvate as a cofactor. Is synthesized initially as an inactive proenzyme. Formation of the active enzyme involves a self-maturation process in which the active site pyruvoyl group is generated from an internal serine residue via an autocatalytic post-translational modification. Two non-identical subunits are generated from the proenzyme in this reaction, and the pyruvate is formed at the N-terminus of the alpha chain, which is derived from the carboxyl end of the proenzyme. The post-translation cleavage follows an unusual pathway, termed non-hydrolytic serinolysis, in which the side chain hydroxyl group of the serine supplies its oxygen atom to form the C-terminus of the beta chain, while the remainder of the serine residue undergoes an oxidative deamination to produce ammonia and the pyruvoyl prosthetic group on the alpha chain.

The protein localises to the cell membrane. It carries out the reaction a 1,2-diacyl-sn-glycero-3-phospho-L-serine + H(+) = a 1,2-diacyl-sn-glycero-3-phosphoethanolamine + CO2. Its pathway is phospholipid metabolism; phosphatidylethanolamine biosynthesis; phosphatidylethanolamine from CDP-diacylglycerol: step 2/2. Catalyzes the formation of phosphatidylethanolamine (PtdEtn) from phosphatidylserine (PtdSer). This is Phosphatidylserine decarboxylase proenzyme from Geobacter metallireducens (strain ATCC 53774 / DSM 7210 / GS-15).